The chain runs to 307 residues: Aspartate carbamoyltransferase catalytic subunit (307 aa).

2 residues coordinate carbamoyl phosphate: Arg59 and Thr60. Position 87 (Lys87) interacts with L-aspartate. 3 residues coordinate carbamoyl phosphate: Arg109, His137, and Gln140. The L-aspartate site is built by Arg173 and Arg223. Gly266 and Pro267 together coordinate carbamoyl phosphate.

Belongs to the aspartate/ornithine carbamoyltransferase superfamily. ATCase family. In terms of assembly, heterododecamer (2C3:3R2) of six catalytic PyrB chains organized as two trimers (C3), and six regulatory PyrI chains organized as three dimers (R2).

It carries out the reaction carbamoyl phosphate + L-aspartate = N-carbamoyl-L-aspartate + phosphate + H(+). The protein operates within pyrimidine metabolism; UMP biosynthesis via de novo pathway; (S)-dihydroorotate from bicarbonate: step 2/3. Functionally, catalyzes the condensation of carbamoyl phosphate and aspartate to form carbamoyl aspartate and inorganic phosphate, the committed step in the de novo pyrimidine nucleotide biosynthesis pathway. This chain is Aspartate carbamoyltransferase catalytic subunit, found in Helicobacter pylori (strain G27).